A 516-amino-acid chain; its full sequence is Delta(24)-sterol reductase (516 aa).

Positions 1–22 (MEPAVSLAVCALLFLLWVRLKG) are cleaved as a signal peptide. Topologically, residues 23–31 (LEFVLIHQR) are lumenal. Residues 32–52 (WVFVCLFLLPLSLIFDIYYYV) form a helical membrane-spanning segment. The Cytoplasmic portion of the chain corresponds to 53–516 (RAWVVFKLSS…YDKICKAARH (464 aa)). In terms of domain architecture, FAD-binding PCMH-type spans 58-234 (FKLSSAPRLH…VAAEIRIIPA (177 aa)). Position 163-175 (163-175 (TVGGLIMGTGIES)) interacts with FAD.

Belongs to the FAD-binding oxidoreductase/transferase type 4 family. As to quaternary structure, interacts with DHCR7; this interaction regulates DHCR7 activity. FAD is required as a cofactor. In terms of tissue distribution, highly expressed in brain and adrenal gland with moderate expression in liver, lung, spleen, prostate and spinal cord. Low expression in heart, uterus and prostate. Undetectable in blood cells. In the brain, strongly expressed in cortical regions, substantia nigra, caudate nucleus, hippocampus, medulla oblongata and pons. In brains affected by Alzheimer disease, expression in the inferior temporal lobe is substantially lower than in the frontal cortex.

It is found in the endoplasmic reticulum membrane. It localises to the golgi apparatus membrane. It carries out the reaction cholesterol + NADP(+) = desmosterol + NADPH + H(+). The enzyme catalyses lanosterol + NADPH + H(+) = 24,25-dihydrolanosterol + NADP(+). The catalysed reaction is 5alpha-cholest-8-en-3beta-ol + NADP(+) = zymosterol + NADPH + H(+). It participates in steroid biosynthesis; cholesterol biosynthesis. In terms of biological role, catalyzes the reduction of the delta-24 double bond of sterol intermediates during cholesterol biosynthesis. In addition to its cholesterol-synthesizing activity, can protect cells from oxidative stress by reducing caspase 3 activity during apoptosis induced by oxidative stress. Also protects against amyloid-beta peptide-induced apoptosis. The chain is Delta(24)-sterol reductase (DHCR24) from Homo sapiens (Human).